A 405-amino-acid polypeptide reads, in one-letter code: Riboflavin biosynthesis protein RibBA (405 aa).

The tract at residues 1–205 (MEQIKLDSIA…IKDLIEYRLT (205 aa)) is DHBP synthase. D-ribulose 5-phosphate is bound by residues 30–31 (RE), Asp-35, 144–148 (RVGHT), and Glu-168. Glu-31 contacts Mg(2+). His-147 provides a ligand contact to Mg(2+). The segment at 206–405 (HESLVKREIG…KMGHTILKKD (200 aa)) is GTP cyclohydrolase II. Position 256 to 260 (256 to 260 (RVHSS)) interacts with GTP. The Zn(2+) site is built by Cys-261, Cys-272, and Cys-274. Residues Gln-277, 299 to 301 (EGR), and Thr-321 each bind GTP. The active-site Proton acceptor; for GTP cyclohydrolase activity is the Asp-333. Catalysis depends on Arg-335, which acts as the Nucleophile; for GTP cyclohydrolase activity. Positions 356 and 361 each coordinate GTP.

In the N-terminal section; belongs to the DHBP synthase family. This sequence in the C-terminal section; belongs to the GTP cyclohydrolase II family. The cofactor is Mg(2+). It depends on Mn(2+) as a cofactor. Zn(2+) is required as a cofactor.

The enzyme catalyses D-ribulose 5-phosphate = (2S)-2-hydroxy-3-oxobutyl phosphate + formate + H(+). It carries out the reaction GTP + 4 H2O = 2,5-diamino-6-hydroxy-4-(5-phosphoribosylamino)-pyrimidine + formate + 2 phosphate + 3 H(+). It functions in the pathway cofactor biosynthesis; riboflavin biosynthesis; 2-hydroxy-3-oxobutyl phosphate from D-ribulose 5-phosphate: step 1/1. It participates in cofactor biosynthesis; riboflavin biosynthesis; 5-amino-6-(D-ribitylamino)uracil from GTP: step 1/4. Catalyzes the conversion of D-ribulose 5-phosphate to formate and 3,4-dihydroxy-2-butanone 4-phosphate. Its function is as follows. Catalyzes the conversion of GTP to 2,5-diamino-6-ribosylamino-4(3H)-pyrimidinone 5'-phosphate (DARP), formate and pyrophosphate. The sequence is that of Riboflavin biosynthesis protein RibBA from Cytophaga hutchinsonii (strain ATCC 33406 / DSM 1761 / CIP 103989 / NBRC 15051 / NCIMB 9469 / D465).